A 521-amino-acid chain; its full sequence is Formate--tetrahydrofolate ligase (521 aa).

Belongs to the formate--tetrahydrofolate ligase family.

The catalysed reaction is (6S)-5,6,7,8-tetrahydrofolate + formate + ATP = (6R)-10-formyltetrahydrofolate + ADP + phosphate. The protein operates within one-carbon metabolism; tetrahydrofolate interconversion. The polypeptide is Formate--tetrahydrofolate ligase (Ureaplasma parvum serovar 3 (strain ATCC 700970)).